We begin with the raw amino-acid sequence, 67 residues long: Large ribosomal subunit protein bL35 (67 aa).

The protein belongs to the bacterial ribosomal protein bL35 family.

This chain is Large ribosomal subunit protein bL35, found in Caldanaerobacter subterraneus subsp. tengcongensis (strain DSM 15242 / JCM 11007 / NBRC 100824 / MB4) (Thermoanaerobacter tengcongensis).